A 51-amino-acid polypeptide reads, in one-letter code: Large ribosomal subunit protein bL33 (51 aa).

This sequence belongs to the bacterial ribosomal protein bL33 family. In terms of assembly, part of the 50S ribosomal subunit. Cross-links to the P and E site tRNAs.

In Pseudomonas aeruginosa (strain ATCC 15692 / DSM 22644 / CIP 104116 / JCM 14847 / LMG 12228 / 1C / PRS 101 / PAO1), this protein is Large ribosomal subunit protein bL33.